The sequence spans 154 residues: Endoribonuclease YbeY (154 aa).

Residues His113, His117, and His123 each coordinate Zn(2+).

Belongs to the endoribonuclease YbeY family. It depends on Zn(2+) as a cofactor.

Its subcellular location is the cytoplasm. In terms of biological role, single strand-specific metallo-endoribonuclease involved in late-stage 70S ribosome quality control and in maturation of the 3' terminus of the 16S rRNA. The protein is Endoribonuclease YbeY of Vibrio parahaemolyticus serotype O3:K6 (strain RIMD 2210633).